A 140-amino-acid polypeptide reads, in one-letter code: Large ribosomal subunit protein uL11 (140 aa).

It belongs to the universal ribosomal protein uL11 family. Part of the ribosomal stalk of the 50S ribosomal subunit. Interacts with L10 and the large rRNA to form the base of the stalk. L10 forms an elongated spine to which L12 dimers bind in a sequential fashion forming a multimeric L10(L12)X complex. Post-translationally, one or more lysine residues are methylated.

In terms of biological role, forms part of the ribosomal stalk which helps the ribosome interact with GTP-bound translation factors. This is Large ribosomal subunit protein uL11 from Geotalea daltonii (strain DSM 22248 / JCM 15807 / FRC-32) (Geobacter daltonii).